The primary structure comprises 470 residues: Glucose-1-phosphate adenylyltransferase (470 aa).

Alpha-D-glucose 1-phosphate is bound by residues Gly-164, Glu-181–Lys-182, and Ser-199.

Belongs to the bacterial/plant glucose-1-phosphate adenylyltransferase family. As to quaternary structure, homotetramer.

The enzyme catalyses alpha-D-glucose 1-phosphate + ATP + H(+) = ADP-alpha-D-glucose + diphosphate. The protein operates within glycan biosynthesis; glycogen biosynthesis. Functionally, involved in the biosynthesis of ADP-glucose, a building block required for the elongation reactions to produce glycogen. Catalyzes the reaction between ATP and alpha-D-glucose 1-phosphate (G1P) to produce pyrophosphate and ADP-Glc. The protein is Glucose-1-phosphate adenylyltransferase of Pseudarthrobacter chlorophenolicus (strain ATCC 700700 / DSM 12829 / CIP 107037 / JCM 12360 / KCTC 9906 / NCIMB 13794 / A6) (Arthrobacter chlorophenolicus).